A 464-amino-acid chain; its full sequence is Glutamate--tRNA ligase (464 aa).

Positions 11-21 match the 'HIGH' region motif; it reads PSPTGFIHLGN. The 'KMSKS' region signature appears at 243-247; sequence KMSKR. Residue Lys-246 participates in ATP binding.

It belongs to the class-I aminoacyl-tRNA synthetase family. Glutamate--tRNA ligase type 1 subfamily. Monomer.

Its subcellular location is the cytoplasm. It catalyses the reaction tRNA(Glu) + L-glutamate + ATP = L-glutamyl-tRNA(Glu) + AMP + diphosphate. Catalyzes the attachment of glutamate to tRNA(Glu) in a two-step reaction: glutamate is first activated by ATP to form Glu-AMP and then transferred to the acceptor end of tRNA(Glu). The protein is Glutamate--tRNA ligase of Polaromonas naphthalenivorans (strain CJ2).